A 69-amino-acid chain; its full sequence is DNA-directed RNA polymerase subunit omega (69 aa).

It belongs to the RNA polymerase subunit omega family. In terms of assembly, the RNAP catalytic core consists of 2 alpha, 1 beta, 1 beta' and 1 omega subunit. When a sigma factor is associated with the core the holoenzyme is formed, which can initiate transcription.

The enzyme catalyses RNA(n) + a ribonucleoside 5'-triphosphate = RNA(n+1) + diphosphate. Functionally, promotes RNA polymerase assembly. Latches the N- and C-terminal regions of the beta' subunit thereby facilitating its interaction with the beta and alpha subunits. The sequence is that of DNA-directed RNA polymerase subunit omega from Heliobacterium modesticaldum (strain ATCC 51547 / Ice1).